We begin with the raw amino-acid sequence, 135 residues long: Bacilliredoxin CHU_0972 (135 aa).

It belongs to the bacilliredoxin family.

In Cytophaga hutchinsonii (strain ATCC 33406 / DSM 1761 / CIP 103989 / NBRC 15051 / NCIMB 9469 / D465), this protein is Bacilliredoxin CHU_0972.